Here is a 412-residue protein sequence, read N- to C-terminus: Multifunctional CCA protein (412 aa).

ATP-binding residues include Gly8 and Arg11. Gly8 and Arg11 together coordinate CTP. Positions 21 and 23 each coordinate Mg(2+). 3 residues coordinate ATP: Arg91, Arg138, and Arg141. Residues Arg91, Arg138, and Arg141 each contribute to the CTP site. Positions 229–334 (RGQHTLLALQ…LELFNQLDVW (106 aa)) constitute an HD domain.

The protein belongs to the tRNA nucleotidyltransferase/poly(A) polymerase family. Bacterial CCA-adding enzyme type 1 subfamily. As to quaternary structure, monomer. Can also form homodimers and oligomers. Mg(2+) is required as a cofactor. It depends on Ni(2+) as a cofactor.

It catalyses the reaction a tRNA precursor + 2 CTP + ATP = a tRNA with a 3' CCA end + 3 diphosphate. It carries out the reaction a tRNA with a 3' CCA end + 2 CTP + ATP = a tRNA with a 3' CCACCA end + 3 diphosphate. Functionally, catalyzes the addition and repair of the essential 3'-terminal CCA sequence in tRNAs without using a nucleic acid template. Adds these three nucleotides in the order of C, C, and A to the tRNA nucleotide-73, using CTP and ATP as substrates and producing inorganic pyrophosphate. tRNA 3'-terminal CCA addition is required both for tRNA processing and repair. Also involved in tRNA surveillance by mediating tandem CCA addition to generate a CCACCA at the 3' terminus of unstable tRNAs. While stable tRNAs receive only 3'-terminal CCA, unstable tRNAs are marked with CCACCA and rapidly degraded. This Haemophilus ducreyi (strain 35000HP / ATCC 700724) protein is Multifunctional CCA protein.